An 86-amino-acid polypeptide reads, in one-letter code: Large ribosomal subunit protein uL23 (86 aa).

Belongs to the universal ribosomal protein uL23 family. In terms of assembly, part of the 50S ribosomal subunit. Contacts protein L29.

Functionally, binds to 23S rRNA. One of the proteins that surrounds the polypeptide exit tunnel on the outside of the ribosome. This chain is Large ribosomal subunit protein uL23, found in Methanococcus maripaludis (strain DSM 14266 / JCM 13030 / NBRC 101832 / S2 / LL).